A 483-amino-acid chain; its full sequence is Glutamate--tRNA ligase (483 aa).

The 'HIGH' region motif lies at 9 to 19; sequence PSPTGFLHIGN. A 'KMSKS' region motif is present at residues 253–257; sequence KLSKR. An ATP-binding site is contributed by lysine 256.

It belongs to the class-I aminoacyl-tRNA synthetase family. Glutamate--tRNA ligase type 1 subfamily. As to quaternary structure, monomer.

The protein resides in the cytoplasm. The enzyme catalyses tRNA(Glu) + L-glutamate + ATP = L-glutamyl-tRNA(Glu) + AMP + diphosphate. Its function is as follows. Catalyzes the attachment of glutamate to tRNA(Glu) in a two-step reaction: glutamate is first activated by ATP to form Glu-AMP and then transferred to the acceptor end of tRNA(Glu). The polypeptide is Glutamate--tRNA ligase (Mycoplasma capricolum subsp. capricolum (strain California kid / ATCC 27343 / NCTC 10154)).